Reading from the N-terminus, the 222-residue chain is Methionine import system permease protein MetP (222 aa).

Residues 18–212 enclose the ABC transmembrane type-1 domain; sequence TYETLYMTLI…IIVFIIQIIG (195 aa). 5 helical membrane-spanning segments follow: residues 25 to 45, 73 to 93, 97 to 117, 152 to 172, and 195 to 215; these read TLIS…LLFL, FLIL…TILG, ALPA…EIAL, ISGI…AGAI, and FVAT…GDLI.

The protein belongs to the binding-protein-dependent transport system permease family. CysTW subfamily. In terms of assembly, the complex is composed of two ATP-binding proteins (MetN), two transmembrane proteins (MetP) and a solute-binding protein (MetQ).

Its subcellular location is the cell membrane. Its function is as follows. Part of the ABC transporter complex MetNPQ involved in methionine import. Responsible for the translocation of the substrate across the membrane. It has also been shown to be involved in methionine sulfoxide transport. The protein is Methionine import system permease protein MetP (metP) of Bacillus subtilis (strain 168).